The following is a 137-amino-acid chain: Large ribosomal subunit protein uL16 (137 aa).

Belongs to the universal ribosomal protein uL16 family. Part of the 50S ribosomal subunit.

In terms of biological role, binds 23S rRNA and is also seen to make contacts with the A and possibly P site tRNAs. The sequence is that of Large ribosomal subunit protein uL16 from Streptococcus uberis (strain ATCC BAA-854 / 0140J).